The sequence spans 52 residues: Large ribosomal subunit protein eL39 (52 aa).

It belongs to the eukaryotic ribosomal protein eL39 family.

The chain is Large ribosomal subunit protein eL39 from Desulfurococcus amylolyticus (strain DSM 18924 / JCM 16383 / VKM B-2413 / 1221n) (Desulfurococcus kamchatkensis).